We begin with the raw amino-acid sequence, 740 residues long: Ribulose bisphosphate carboxylase, chloroplastic (740 aa).

Residues 1-55 constitute a chloroplast transit peptide; that stretch reads MPSSSFTTGLALGAGALVGANAFVAPTAKTTNLRAPTQEASLQVAASQQTEQPAP. The chain crosses the membrane as a helical span at residues 56-76; sequence STSALPWAFGAGACLALAAGG. Asparagine 213 is a substrate binding site. Lysine 268 (proton acceptor) is an active-site residue. Substrate is bound at residue lysine 270. Residues lysine 293, aspartate 295, and glutamate 296 each contribute to the Mg(2+) site. N6-carboxylysine is present on lysine 293. Catalysis depends on histidine 389, which acts as the Proton acceptor. 3 residues coordinate substrate: arginine 390, histidine 423, and serine 470.

It belongs to the RuBisCO large chain family. Type II subfamily. Homodimer. The cofactor is Mg(2+).

Its subcellular location is the plastid. The protein resides in the chloroplast membrane. The enzyme catalyses 2 (2R)-3-phosphoglycerate + 2 H(+) = D-ribulose 1,5-bisphosphate + CO2 + H2O. It carries out the reaction D-ribulose 1,5-bisphosphate + O2 = 2-phosphoglycolate + (2R)-3-phosphoglycerate + 2 H(+). RuBisCO catalyzes two reactions: the carboxylation of D-ribulose 1,5-bisphosphate, the primary event in carbon dioxide fixation, as well as the oxidative fragmentation of the pentose substrate. Both reactions occur simultaneously and in competition at the same active site. This is Ribulose bisphosphate carboxylase, chloroplastic (rbcL) from Heterocapsa triquetra (Dinoflagellate).